Reading from the N-terminus, the 189-residue chain is GMP synthase [glutamine-hydrolyzing] subunit A (189 aa).

The Glutamine amidotransferase type-1 domain occupies 1–189 (MIVILNNGGQ…CKVCGFKFNE (189 aa)). The active-site Nucleophile is Cys76. Residues His163 and Glu165 contribute to the active site.

As to quaternary structure, heterodimer composed of a glutamine amidotransferase subunit (A) and a GMP-binding subunit (B).

It catalyses the reaction XMP + L-glutamine + ATP + H2O = GMP + L-glutamate + AMP + diphosphate + 2 H(+). It participates in purine metabolism; GMP biosynthesis; GMP from XMP (L-Gln route): step 1/1. Functionally, catalyzes the synthesis of GMP from XMP. In Methanococcus vannielii (strain ATCC 35089 / DSM 1224 / JCM 13029 / OCM 148 / SB), this protein is GMP synthase [glutamine-hydrolyzing] subunit A.